The following is a 292-amino-acid chain: tRNA (adenine(9)-N1)-methyltransferase (292 aa).

The region spanning 72–253 (TFRKGGKKVS…ISLQSKSDKI (182 aa)) is the SAM-dependent MTase TRM10-type domain.

Belongs to the class IV-like SAM-binding methyltransferase superfamily. TRM10 family.

It localises to the cytoplasm. The catalysed reaction is adenosine(9) in tRNA + S-adenosyl-L-methionine = N(1)-methyladenosine(9) in tRNA + S-adenosyl-L-homocysteine + H(+). Functionally, catalyzes the S-adenosyl-L-methionine-dependent formation of N(1)-methyladenine at position 9 (m1A9) in tRNA. This Sulfolobus acidocaldarius (strain ATCC 33909 / DSM 639 / JCM 8929 / NBRC 15157 / NCIMB 11770) protein is tRNA (adenine(9)-N1)-methyltransferase.